Consider the following 181-residue polypeptide: Inner membrane-spanning protein YciB (181 aa).

A run of 5 helical transmembrane segments spans residues 10 to 30 (LVIFFAVYKFFDIYIASGALI), 50 to 70 (MHLITFAMVTVFGTLTLVFHD), 72 to 92 (AFIKWKVTIIYALFALALGIS), 118 to 138 (ITWYWVIFFATCGLVNIYVAF), and 148 to 168 (FKVFGLTALTLVNTVITVFYL).

It belongs to the YciB family.

The protein localises to the cell inner membrane. In terms of biological role, plays a role in cell envelope biogenesis, maintenance of cell envelope integrity and membrane homeostasis. The protein is Inner membrane-spanning protein YciB of Shewanella putrefaciens (strain CN-32 / ATCC BAA-453).